The sequence spans 171 residues: uncharacterized protein (171 aa).

The segment at 139–171 (ARKPTKSDDEEEEVGKMGGISSSINSWVQRQKL) is disordered. Residues 158–171 (ISSSINSWVQRQKL) are compositionally biased toward polar residues.

This is an uncharacterized protein from Caenorhabditis elegans.